The sequence spans 200 residues: Superoxide dismutase [Mn] 2 (200 aa).

Histidine 28, histidine 76, aspartate 158, and histidine 162 together coordinate Mn(2+).

It belongs to the iron/manganese superoxide dismutase family. Mn(2+) is required as a cofactor.

The catalysed reaction is 2 superoxide + 2 H(+) = H2O2 + O2. In terms of biological role, destroys superoxide anion radicals which are normally produced within the cells and which are toxic to biological systems. This Halobacterium salinarum (strain ATCC 700922 / JCM 11081 / NRC-1) (Halobacterium halobium) protein is Superoxide dismutase [Mn] 2 (sod2).